Here is a 75-residue protein sequence, read N- to C-terminus: Small ribosomal subunit protein bS18 (75 aa).

Belongs to the bacterial ribosomal protein bS18 family. In terms of assembly, part of the 30S ribosomal subunit. Forms a tight heterodimer with protein bS6.

Binds as a heterodimer with protein bS6 to the central domain of the 16S rRNA, where it helps stabilize the platform of the 30S subunit. This is Small ribosomal subunit protein bS18 from Dinoroseobacter shibae (strain DSM 16493 / NCIMB 14021 / DFL 12).